The chain runs to 100 residues: Large ribosomal subunit protein uL23 (100 aa).

The protein belongs to the universal ribosomal protein uL23 family. Part of the 50S ribosomal subunit. Contacts protein L29, and trigger factor when it is bound to the ribosome.

Its function is as follows. One of the early assembly proteins it binds 23S rRNA. One of the proteins that surrounds the polypeptide exit tunnel on the outside of the ribosome. Forms the main docking site for trigger factor binding to the ribosome. The chain is Large ribosomal subunit protein uL23 from Prochlorococcus marinus (strain MIT 9313).